The chain runs to 158 residues: Protein shisa-like-2B (158 aa).

A helical transmembrane segment spans residues 65–85 (IGALVGLGIAALVLLAFVISV).

This sequence belongs to the shisa family.

It is found in the membrane. The polypeptide is Protein shisa-like-2B (Shisal2b) (Mus musculus (Mouse)).